Reading from the N-terminus, the 165-residue chain is Bacterial non-heme ferritin (165 aa).

A Ferritin-like diiron domain is found at 1-145 (MLKPEMIEKL…SIIDKLSLAG (145 aa)). Positions 17, 49, 50, 53, 94, 126, 127, and 130 each coordinate Fe cation.

It belongs to the ferritin family. Prokaryotic subfamily. As to quaternary structure, homooligomer of 24 subunits that assemble into a spherical protein shell (12 +/- 1 nM diameter) that can sequester at least 2000 iron atoms.

It localises to the cytoplasm. The catalysed reaction is 4 Fe(2+) + O2 + 6 H2O = 4 iron(III) oxide-hydroxide + 12 H(+). Functionally, iron-storage protein. In Escherichia coli O157:H7, this protein is Bacterial non-heme ferritin (ftnA).